Here is a 386-residue protein sequence, read N- to C-terminus: Tumor necrosis factor receptor superfamily member 10D (386 aa).

Disordered stretches follow at residues Met-1–Ala-25 and Asp-62–Ser-90. The N-terminal stretch at Met-1–Ser-55 is a signal peptide. Topologically, residues Ala-56 to His-211 are extracellular. 3 TNFR-Cys repeats span residues Ile-58–Asn-97, Pro-98–Cys-139, and Gln-140–Cys-180. Over residues Val-64 to Arg-75 the composition is skewed to polar residues. 7 disulfide bridges follow: Cys-83-Cys-96, Cys-99-Cys-115, Cys-118-Cys-131, Cys-121-Cys-139, Cys-141-Cys-155, Cys-158-Cys-172, and Cys-162-Cys-180. A glycan (N-linked (GlcNAc...) asparagine) is linked at Asn-127. N-linked (GlcNAc...) asparagine glycosylation is present at Asn-182. A helical membrane pass occupies residues Tyr-212–Cys-232. The Cytoplasmic portion of the chain corresponds to Arg-233–Leu-386. The Death; truncated domain maps to Ser-340 to Leu-366.

As to expression, widely expressed, in particular in fetal kidney, lung and liver, and in adult testis and liver. Also expressed in peripheral blood leukocytes, colon and small intestine, ovary, prostate, thymus, spleen, pancreas, kidney, lung, placenta and heart.

It localises to the membrane. Receptor for the cytotoxic ligand TRAIL. Contains a truncated death domain and hence is not capable of inducing apoptosis but protects against TRAIL-mediated apoptosis. Reports are contradictory with regards to its ability to induce the NF-kappa-B pathway. According to PubMed:9382840, it cannot but according to PubMed:9430226, it can induce the NF-kappa-B pathway. This chain is Tumor necrosis factor receptor superfamily member 10D, found in Homo sapiens (Human).